We begin with the raw amino-acid sequence, 191 residues long: Neuronal calcium sensor 1 (191 aa).

A lipid anchor (N-myristoyl glycine) is attached at glycine 2. EF-hand domains are found at residues 24–59, 60–95, 96–131, and 144–179; these read EAEI…FPFG, DPSK…TSRG, TVEE…IYRM, and TPEK…DPTI. Residues aspartate 73, asparagine 75, aspartate 77, glutamate 84, aspartate 109, aspartate 111, aspartate 113, glutamate 120, aspartate 157, asparagine 159, aspartate 161, lysine 163, and glutamate 168 each coordinate Ca(2+).

It belongs to the recoverin family.

Neuronal calcium sensor, regulator of G protein-coupled receptor phosphorylation in a calcium dependent manner. Regulates neurite extension and branching by activity-dependent (Ca2+) influx in growth cones. The protein is Neuronal calcium sensor 1 of Aplysia californica (California sea hare).